The following is a 471-amino-acid chain: Glutamyl-tRNA(Gln) amidotransferase subunit A (471 aa).

Catalysis depends on charge relay system residues lysine 66 and serine 141. The Acyl-ester intermediate role is filled by serine 165.

The protein belongs to the amidase family. GatA subfamily. In terms of assembly, heterotrimer of A, B and C subunits.

The catalysed reaction is L-glutamyl-tRNA(Gln) + L-glutamine + ATP + H2O = L-glutaminyl-tRNA(Gln) + L-glutamate + ADP + phosphate + H(+). Allows the formation of correctly charged Gln-tRNA(Gln) through the transamidation of misacylated Glu-tRNA(Gln) in organisms which lack glutaminyl-tRNA synthetase. The reaction takes place in the presence of glutamine and ATP through an activated gamma-phospho-Glu-tRNA(Gln). The polypeptide is Glutamyl-tRNA(Gln) amidotransferase subunit A (Thermus thermophilus (strain ATCC BAA-163 / DSM 7039 / HB27)).